Here is a 182-residue protein sequence, read N- to C-terminus: Testis-expressed protein 29 (182 aa).

The Extracellular segment spans residues 1–56 (MRYTTDIKKSPPQLLKTFAVCDISLYDICDYNVTRDQCKELGCCFYKGVCYKKVVP). The helical transmembrane segment at 57 to 77 (IYVQMFSTLIVLVTGIIIITI) threads the bilayer. The Cytoplasmic portion of the chain corresponds to 78-182 (IYRIVQEIKR…PPTDPSENPP (105 aa)). The segment at 91–182 (LSMNSTPKAS…PPTDPSENPP (92 aa)) is disordered. Positions 115 to 170 (RAPSRSPSRTSSTLSSRSPTTAPTTAPTTDPATDPATDPATDPATDPATDPATDPA) are enriched in low complexity. Residues 171-182 (TAPPTDPSENPP) show a composition bias toward pro residues.

It localises to the membrane. This chain is Testis-expressed protein 29 (Tex29), found in Rattus norvegicus (Rat).